The sequence spans 123 residues: Small ribosomal subunit protein uS12 (123 aa).

Position 89 is a 3-methylthioaspartic acid (aspartate 89).

This sequence belongs to the universal ribosomal protein uS12 family. As to quaternary structure, part of the 30S ribosomal subunit. Contacts proteins S8 and S17. May interact with IF1 in the 30S initiation complex.

With S4 and S5 plays an important role in translational accuracy. Functionally, interacts with and stabilizes bases of the 16S rRNA that are involved in tRNA selection in the A site and with the mRNA backbone. Located at the interface of the 30S and 50S subunits, it traverses the body of the 30S subunit contacting proteins on the other side and probably holding the rRNA structure together. The combined cluster of proteins S8, S12 and S17 appears to hold together the shoulder and platform of the 30S subunit. The polypeptide is Small ribosomal subunit protein uS12 (Geobacter metallireducens (strain ATCC 53774 / DSM 7210 / GS-15)).